Here is a 167-residue protein sequence, read N- to C-terminus: Transmembrane protein 229B (167 aa).

The Cytoplasmic portion of the chain corresponds to 1 to 14; that stretch reads MASAEPLTALSRWY. A helical membrane pass occupies residues 15 to 35; it reads LYAIHGYFCEVMFTAAWEFVV. The Extracellular portion of the chain corresponds to 36–40; the sequence is NFNWK. Residues 41–61 form a helical membrane-spanning segment; the sequence is FPGVTSVWALFIYGTSILIVE. The Cytoplasmic segment spans residues 62–73; sequence RMYLRLRGRCPL. A helical transmembrane segment spans residues 74–94; that stretch reads LLRCLIYTLWTYLWEFTTGFI. The Extracellular segment spans residues 95 to 111; the sequence is LRQFNACPWDYSQFDFD. The chain crosses the membrane as a helical span at residues 112-132; that stretch reads FMGLITLEYAVPWFCGALLVE. The Cytoplasmic portion of the chain corresponds to 133–167; the sequence is QFVIRNTLRLRFDKDAEPGEPSGALALANGHVKTD.

The protein belongs to the TMEM229 family.

It localises to the membrane. The sequence is that of Transmembrane protein 229B (TMEM229B) from Bos taurus (Bovine).